The following is a 116-amino-acid chain: MKSLGRHVIVELWGCQNIDSLQAVEEAIRDAVAATNATLRDLQVFPWEPYNGVSGIAILSESHLSIHTWPELGYAAVDVFTCGEHTNPEAAIPVLRERFRPQRMEVMQVSRGMIVD.

The Schiff-base intermediate with substrate; via pyruvic acid role is filled by S62. Residue S62 is modified to Pyruvic acid (Ser); by autocatalysis. Residue H67 is the Proton acceptor; for processing activity of the active site. Catalysis depends on C82, which acts as the Proton donor; for catalytic activity.

The protein belongs to the prokaryotic AdoMetDC family. Type 1 subfamily. In terms of assembly, heterotetramer of two alpha and two beta chains arranged as a dimer of alpha/beta heterodimers. Pyruvate serves as cofactor. Is synthesized initially as an inactive proenzyme. Formation of the active enzyme involves a self-maturation process in which the active site pyruvoyl group is generated from an internal serine residue via an autocatalytic post-translational modification. Two non-identical subunits are generated from the proenzyme in this reaction, and the pyruvate is formed at the N-terminus of the alpha chain, which is derived from the carboxyl end of the proenzyme. The post-translation cleavage follows an unusual pathway, termed non-hydrolytic serinolysis, in which the side chain hydroxyl group of the serine supplies its oxygen atom to form the C-terminus of the beta chain, while the remainder of the serine residue undergoes an oxidative deamination to produce ammonia and the pyruvoyl group blocking the N-terminus of the alpha chain.

It carries out the reaction S-adenosyl-L-methionine + H(+) = S-adenosyl 3-(methylsulfanyl)propylamine + CO2. It participates in amine and polyamine biosynthesis; S-adenosylmethioninamine biosynthesis; S-adenosylmethioninamine from S-adenosyl-L-methionine: step 1/1. Its function is as follows. Catalyzes the decarboxylation of S-adenosylmethionine to S-adenosylmethioninamine (dcAdoMet), the propylamine donor required for the synthesis of the polyamines spermine and spermidine from the diamine putrescine. The protein is S-adenosylmethionine decarboxylase proenzyme of Thermomicrobium roseum (strain ATCC 27502 / DSM 5159 / P-2).